The chain runs to 883 residues: Envelope glycoprotein B (883 aa).

The signal sequence occupies residues 1–31; the sequence is MQSYIAVNIDMASLKMLICVCVAILIPSTLS. The Virion surface portion of the chain corresponds to 32–750; sequence QDSHGIGWNN…SGIASFLSNP (719 aa). 5 cysteine pairs are disulfide-bonded: cysteine 77-cysteine 535, cysteine 94-cysteine 491, cysteine 167-cysteine 229, cysteine 321-cysteine 369, and cysteine 558-cysteine 608. N-linked (GlcNAc...) asparagine; by host glycans are attached at residues asparagine 102 and asparagine 121. The tract at residues 134–140 is involved in fusion and/or binding to host membrane; it reads TWALFSR. Residue asparagine 211 is glycosylated (N-linked (GlcNAc...) asparagine; by host). Positions 216 to 223 are involved in fusion and/or binding to host membrane; sequence HQTLGYRT. Asparagine 262 and asparagine 360 each carry an N-linked (GlcNAc...) asparagine; by host glycan. A disordered region spans residues 428–457; sequence QNHLPRGRERRQAAGRRTASLQSGPQGDRI. N-linked (GlcNAc...) asparagine; by host glycosylation is found at asparagine 579, asparagine 635, and asparagine 649. Hydrophobic membrane proximal region stretches follow at residues 694–748 and 724–744; these read IDTV…SFLS and ALGT…SGIA. The helical transmembrane segment at 751-771 threads the bilayer; sequence FAALAIGIAVVVSIILGLLAF. The Intravirion segment spans residues 772–883; the sequence is KYVMNLKSNP…PSWAEESEDE (112 aa). The segment at 791-817 is disordered; sequence PPAGTPPRPSRRYYKDEEEVEEDSDED. Residues 806–817 show a composition bias toward acidic residues; that stretch reads DEEEVEEDSDED. Residues 868-871 carry the Internalization motif motif; the sequence is YPLL.

It belongs to the herpesviridae glycoprotein B family. Homotrimer; disulfide-linked. Binds to heparan sulfate proteoglycans. Interacts with gH/gL heterodimer. Post-translationally, a proteolytic cleavage by host furin generates two subunits that remain linked by disulfide bonds.

Its subcellular location is the virion membrane. It is found in the host cell membrane. The protein resides in the host endosome membrane. It localises to the host Golgi apparatus membrane. Its function is as follows. Envelope glycoprotein that forms spikes at the surface of virion envelope. Essential for the initial attachment to heparan sulfate moieties of the host cell surface proteoglycans. Involved in fusion of viral and cellular membranes leading to virus entry into the host cell. Following initial binding to its host receptors, membrane fusion is mediated by the fusion machinery composed at least of gB and the heterodimer gH/gL. May be involved in the fusion between the virion envelope and the outer nuclear membrane during virion egress. The sequence is that of Envelope glycoprotein B from Infectious laryngotracheitis virus (strain SA-2) (ILTV).